We begin with the raw amino-acid sequence, 644 residues long: Cyclin-dependent kinase C-2 C (644 aa).

The Protein kinase domain occupies 105 to 389 (FQKLEKIGQG…ASSALNSEYF (285 aa)). ATP is bound by residues 111 to 119 (IGQGTYSSV) and K134. The residue at position 116 (Y116) is a Phosphotyrosine. D229 serves as the catalytic Proton acceptor. T263 carries the post-translational modification Phosphothreonine. The short motif at 420 to 427 (RKRANLKL) is the Nuclear localization signal element. Residues 565–576 (SKLSRIGERHGS) are compositionally biased toward basic and acidic residues. Positions 565-591 (SKLSRIGERHGSLDGSGLDFSQREEDS) are disordered.

It belongs to the protein kinase superfamily. CMGC Ser/Thr protein kinase family. CDC2/CDKX subfamily. Autophosphorylated. As to expression, expressed specifically in flowers and pollen.

The protein resides in the nucleus. The chain is Cyclin-dependent kinase C-2 C from Arabidopsis thaliana (Mouse-ear cress).